Consider the following 54-residue polypeptide: SCINHGDACDGYKDDCQCCRRNGFCSCSGIFGYKWNCICDVGTTATSYGICMAK.

Intrachain disulfides connect C2–C19, C9–C25, C16–C51, C18–C39, and C27–C37.

Expressed by the venom gland.

It localises to the secreted. Functionally, omega-agatoxins are antagonists of voltage-gated calcium channels (Cav). Causes rapid general flaccid paralysis followed by death in 10-30 minutes when injected in mice at dose levels of 5 ug per mouse. This chain is U1-ctenitoxin-Pr1a, found in Phoneutria reidyi (Brazilian Amazonian armed spider).